The sequence spans 444 residues: Trigger factor (444 aa).

Positions 166 to 251 constitute a PPIase FKBP-type domain; it reads GDQVVIDFKG…VKAVKAPKAA (86 aa).

Belongs to the FKBP-type PPIase family. Tig subfamily.

The protein resides in the cytoplasm. It carries out the reaction [protein]-peptidylproline (omega=180) = [protein]-peptidylproline (omega=0). Functionally, involved in protein export. Acts as a chaperone by maintaining the newly synthesized protein in an open conformation. Functions as a peptidyl-prolyl cis-trans isomerase. The chain is Trigger factor from Cereibacter sphaeroides (strain KD131 / KCTC 12085) (Rhodobacter sphaeroides).